The primary structure comprises 195 residues: MSLKIGIAGPVGSGKTSLIESLTNLLKDKYSLGIVTNDIYTTEDANYLKKTLDLDNERIIGVETGGCPHTAIRDDISMNQKAVVELEEKFNPDIVFVESGGDNLSATFSYELIDYYIYVIDVAQGADIPRKKGAGLLFSDLLIVNKTDLAPYVEIDLVDMQIDVKENRKNKPYVFISKKEPQTLNQVVSWIEALI.

9 to 16 (GPVGSGKT) is a GTP binding site.

It belongs to the SIMIBI class G3E GTPase family. UreG subfamily. As to quaternary structure, homodimer. UreD, UreF and UreG form a complex that acts as a GTP-hydrolysis-dependent molecular chaperone, activating the urease apoprotein by helping to assemble the nickel containing metallocenter of UreC. The UreE protein probably delivers the nickel.

Its subcellular location is the cytoplasm. Facilitates the functional incorporation of the urease nickel metallocenter. This process requires GTP hydrolysis, probably effectuated by UreG. The chain is Urease accessory protein UreG from Aliarcobacter butzleri (strain RM4018) (Arcobacter butzleri).